The following is a 142-amino-acid chain: ATP synthase epsilon chain, chloroplastic (142 aa).

It belongs to the ATPase epsilon chain family. As to quaternary structure, F-type ATPases have 2 components, CF(1) - the catalytic core - and CF(0) - the membrane proton channel. CF(1) has five subunits: alpha(3), beta(3), gamma(1), delta(1), epsilon(1). CF(0) has three main subunits: a, b and c.

The protein localises to the plastid. It is found in the chloroplast thylakoid membrane. Functionally, produces ATP from ADP in the presence of a proton gradient across the membrane. This Ostreococcus tauri protein is ATP synthase epsilon chain, chloroplastic.